Here is an 804-residue protein sequence, read N- to C-terminus: Elongation factor G, mitochondrial (804 aa).

The N-terminal 9 residues, 1-9, are a transit peptide targeting the mitochondrion; that stretch reads MVRPAQVRA. The 287-residue stretch at 103–389 folds into the tr-type G domain; the sequence is SKVRNIGIAA…GVCDYLPNPS (287 aa). GTP-binding positions include 112–119, 187–191, and 241–244; these read AHIDSGKT, DTPGH, and NKMD.

Belongs to the TRAFAC class translation factor GTPase superfamily. Classic translation factor GTPase family. EF-G/EF-2 subfamily.

It localises to the mitochondrion. It functions in the pathway protein biosynthesis; polypeptide chain elongation. Functionally, mitochondrial GTPase that catalyzes the GTP-dependent ribosomal translocation step during translation elongation. During this step, the ribosome changes from the pre-translocational (PRE) to the post-translocational (POST) state as the newly formed A-site-bound peptidyl-tRNA and P-site-bound deacylated tRNA move to the P and E sites, respectively. Catalyzes the coordinated movement of the two tRNA molecules, the mRNA and conformational changes in the ribosome. This chain is Elongation factor G, mitochondrial (mef1), found in Talaromyces stipitatus (strain ATCC 10500 / CBS 375.48 / QM 6759 / NRRL 1006) (Penicillium stipitatum).